Here is a 723-residue protein sequence, read N- to C-terminus: Probable G-protein coupled receptor 149 (723 aa).

The Extracellular segment spans residues 1 to 31 (MSVMPSNLSLNGTSFFAENHSIMDKPNEQRT). N-linked (GlcNAc...) asparagine glycosylation is found at Asn7, Asn11, and Asn19. A helical transmembrane segment spans residues 32–52 (LNVFLFCSTFIIAFTVLLGSI). The Cytoplasmic portion of the chain corresponds to 53–69 (YSLVSLLKLQNKSTISM). Residues 70 to 90 (IVTSLSIDDLISIVPVIIFML) form a helical membrane-spanning segment. Over 91 to 106 (TQWSSDALPQPLCTTS) the chain is Extracellular. A disulfide bond links Cys103 and Cys181. A helical transmembrane segment spans residues 107–127 (ALIYLFQGISSNLKGSLIVSY). Over 128 to 148 (NFYSINKTETMNCSASKRRVS) the chain is Cytoplasmic. The chain crosses the membrane as a helical span at residues 149–169 (MVWAILSIWIVSLLICILPLC). At 170–188 (GWGKYIPTTWGCFTDHASS) the chain is on the extracellular side. Residues 189 to 209 (YILFLFIVYSLCFCLLTVLSV) traverse the membrane as a helical segment. The Cytoplasmic segment spans residues 210-306 (PLTYQLLCSD…SFTVGFAQKR (97 aa)). A helical membrane pass occupies residues 307–327 (FSLILALTKVILWLPMMIQMV). Topologically, residues 328 to 338 (VQHITGYQSFS) are extracellular. Residues 339-359 (FETLSFLLTLLAATVTPVFVL) form a helical membrane-spanning segment. Residues 360–723 (SEHWIHLPCG…RKREEDGNSN (364 aa)) are Cytoplasmic-facing. Residues 451–513 (TTDSARPGPA…ERRLSHEEGH (63 aa)) are disordered. Positions 501-513 (EGPERRLSHEEGH) are enriched in basic and acidic residues.

Belongs to the G-protein coupled receptor 1 family. Specific expression in peripheral nervous system, including nerve growth factor-dependent sensory and sympathetic neurons, as well as enteric neurons.

Its subcellular location is the cell membrane. Orphan receptor. This chain is Probable G-protein coupled receptor 149 (GPR149), found in Gallus gallus (Chicken).